Here is a 671-residue protein sequence, read N- to C-terminus: MLPHPLAILSEEETNIARNVILAQHPNTVIDFREIYLSEPPKAQLLEFLALEHSGRLSPTSPRPPRLALCQYDVIGNDRIPSFEESVVDVGTRQRVQHRVVGKEHHASLTLSEFDTLVERCFASPLFQKALADFDLPEGFEVVIEPWPYGGLDYVEEKRRYFQGLCFATDKRKNNPDANFYSYPLPLIPVMDALTQEIIRVDRPATGGKGEGLTEQTFKRDIIGHCKDSDYVPELNPGGTRKDLKPLNVVQPEGPSFRITEESLVEWQKWRFRVAFNPREGATIHDVWYDGRSVLYRLSVSEMTVPYADPRPPFHRKQAFDFGDGGGGNMANNLSIGCDCLGVIKYFDAVMTGADGSAKKMPNAICLHEQDNGIGWKHSNWRTGRAVVTRHRELVVQFIITLANYEYIFAYKFDQSGGITVESRATGILNVVNIDAGKVSEYGNVVSGGVLAQNHQHIFCVRIDPAIDGPNNSVQVEESHPVPMNAVTNPNGNFYKVNTETMERAGFFDAAPELNRTVKMVNPHKKNPISQKPVGYKFIPLATQRLLADPNSIQARRAQFAQHHVWVTKYRDGELYAGGRYTLQSQEEIEGVSDAVKRGDSVVDTDVVVWSTFGITHNPRVEDWPVMPVEIFQLMIRPADFFTANPSLDVPSDKNISSRVVGNDCCRNAHI.

An N2 region spans residues 3-106 (PHPLAILSEE…QHRVVGKEHH (104 aa)). Residues 107–211 (ASLTLSEFDT…DRPATGGKGE (105 aa)) form an N3 region. 319-330 (AFDFGDGGGGNM) is a substrate binding site. Asp321 acts as the Proton acceptor in catalysis. Cys340 and Cys366 are disulfide-bonded. Residue 402–407 (LANYEY) coordinates substrate. Tyr405 serves as the catalytic Schiff-base intermediate with substrate; via topaquinone. At Tyr405 the chain carries 2',4',5'-topaquinone. Positions 455 and 457 each coordinate Cu cation. Residue Asp464 coordinates Mn(2+). Asn471 carries an N-linked (GlcNAc...) asparagine glycan. A Mn(2+)-binding site is contributed by Asp606. His617 serves as a coordination point for Cu cation.

Belongs to the copper/topaquinone oxidase family. Homodimer. Cu cation is required as a cofactor. Zn(2+) serves as cofactor. It depends on L-topaquinone as a cofactor. The cofactor is Mn(2+). Post-translationally, topaquinone (TPQ) is generated by copper-dependent autoxidation of a specific tyrosyl residue.

The catalysed reaction is histamine + O2 + H2O = imidazole-4-acetaldehyde + H2O2 + NH4(+). This chain is Copper amine oxidase 1 (AO-I), found in Aspergillus niger.